The following is a 242-amino-acid chain: 1-(5-phosphoribosyl)-5-[(5-phosphoribosylamino)methylideneamino] imidazole-4-carboxamide isomerase (242 aa).

The active-site Proton acceptor is the aspartate 7. The active-site Proton donor is the aspartate 129.

It belongs to the HisA/HisF family.

It is found in the cytoplasm. The catalysed reaction is 1-(5-phospho-beta-D-ribosyl)-5-[(5-phospho-beta-D-ribosylamino)methylideneamino]imidazole-4-carboxamide = 5-[(5-phospho-1-deoxy-D-ribulos-1-ylimino)methylamino]-1-(5-phospho-beta-D-ribosyl)imidazole-4-carboxamide. The protein operates within amino-acid biosynthesis; L-histidine biosynthesis; L-histidine from 5-phospho-alpha-D-ribose 1-diphosphate: step 4/9. The sequence is that of 1-(5-phosphoribosyl)-5-[(5-phosphoribosylamino)methylideneamino] imidazole-4-carboxamide isomerase from Pseudoalteromonas translucida (strain TAC 125).